A 102-amino-acid polypeptide reads, in one-letter code: MNIRPLHDRVIVERKEVESKSAGGIVLTGSAAEKSTRGVVLAVGKGRILENGTVLPLDVKVGDTVIFAEGYGTKTEKIDGKEVLVMSENDIMAIVDLIAIVE.

The protein belongs to the GroES chaperonin family. Heptamer of 7 subunits arranged in a ring. Interacts with the chaperonin GroEL.

It localises to the cytoplasm. Together with the chaperonin GroEL, plays an essential role in assisting protein folding. The GroEL-GroES system forms a nano-cage that allows encapsulation of the non-native substrate proteins and provides a physical environment optimized to promote and accelerate protein folding. GroES binds to the apical surface of the GroEL ring, thereby capping the opening of the GroEL channel. This is Co-chaperonin GroES from Vibrio harveyi (Beneckea harveyi).